The chain runs to 73 residues: uncharacterized protein (73 aa).

This is an uncharacterized protein from Escherichia coli (strain K12).